The primary structure comprises 195 residues: Peptidyl-tRNA hydrolase (195 aa).

Position 17 (Tyr-17) interacts with tRNA. Catalysis depends on His-22, which acts as the Proton acceptor. TRNA contacts are provided by Phe-68, Asn-70, and Asn-116.

It belongs to the PTH family. As to quaternary structure, monomer.

It is found in the cytoplasm. It carries out the reaction an N-acyl-L-alpha-aminoacyl-tRNA + H2O = an N-acyl-L-amino acid + a tRNA + H(+). In terms of biological role, hydrolyzes ribosome-free peptidyl-tRNAs (with 1 or more amino acids incorporated), which drop off the ribosome during protein synthesis, or as a result of ribosome stalling. Catalyzes the release of premature peptidyl moieties from peptidyl-tRNA molecules trapped in stalled 50S ribosomal subunits, and thus maintains levels of free tRNAs and 50S ribosomes. The chain is Peptidyl-tRNA hydrolase from Erwinia tasmaniensis (strain DSM 17950 / CFBP 7177 / CIP 109463 / NCPPB 4357 / Et1/99).